Here is a 229-residue protein sequence, read N- to C-terminus: tRNA (guanosine(18)-2'-O)-methyltransferase (229 aa).

Residues threonine 96, isoleucine 139, and leucine 148 each contribute to the S-adenosyl-L-methionine site.

It belongs to the class IV-like SAM-binding methyltransferase superfamily. RNA methyltransferase TrmH family.

It carries out the reaction guanosine(18) in tRNA + S-adenosyl-L-methionine = 2'-O-methylguanosine(18) in tRNA + S-adenosyl-L-homocysteine + H(+). Catalyzes the 2'-O methylation of guanosine at position 18 in tRNA. This chain is tRNA (guanosine(18)-2'-O)-methyltransferase, found in Escherichia coli O157:H7.